We begin with the raw amino-acid sequence, 205 residues long: Holliday junction branch migration complex subunit RuvA (205 aa).

A domain I region spans residues 1 to 62 (MFEYVTGYVE…EDIMALYGFK (62 aa)). The domain II stretch occupies residues 63–141 (TREERLLFTK…DVVPDAFVDL (79 aa)). The interval 142 to 152 (FSDTERFDEKK) is flexible linker. Residues 153–205 (GSSAELDEALEALRALGYAEREVSRVVPELLKESLTTDQYIKKALSLLLNGKR) form a domain III region.

Belongs to the RuvA family. Homotetramer. Forms an RuvA(8)-RuvB(12)-Holliday junction (HJ) complex. HJ DNA is sandwiched between 2 RuvA tetramers; dsDNA enters through RuvA and exits via RuvB. An RuvB hexamer assembles on each DNA strand where it exits the tetramer. Each RuvB hexamer is contacted by two RuvA subunits (via domain III) on 2 adjacent RuvB subunits; this complex drives branch migration. In the full resolvosome a probable DNA-RuvA(4)-RuvB(12)-RuvC(2) complex forms which resolves the HJ.

The protein localises to the cytoplasm. Its function is as follows. The RuvA-RuvB-RuvC complex processes Holliday junction (HJ) DNA during genetic recombination and DNA repair, while the RuvA-RuvB complex plays an important role in the rescue of blocked DNA replication forks via replication fork reversal (RFR). RuvA specifically binds to HJ cruciform DNA, conferring on it an open structure. The RuvB hexamer acts as an ATP-dependent pump, pulling dsDNA into and through the RuvAB complex. HJ branch migration allows RuvC to scan DNA until it finds its consensus sequence, where it cleaves and resolves the cruciform DNA. In Bacillus cereus (strain ATCC 14579 / DSM 31 / CCUG 7414 / JCM 2152 / NBRC 15305 / NCIMB 9373 / NCTC 2599 / NRRL B-3711), this protein is Holliday junction branch migration complex subunit RuvA.